The primary structure comprises 393 residues: MKRPVTGKDLMIVNMGPHHPSMHGVLRLIVTLDGEDVVDCEPILGYLHRGMEKIAENRAIIQYLPYVTRWDYLATMFTEAITVNGPEQLGNIQVPKRASYIRVIMLELSRIASHLLWLGPFMADIGAQTPFFYIFREREFVYDLFEAATGMRMMHNFFRIGGIAADLPYGWIDKCLDFCDYFLTEVIEYQKLITRNPIFLERVEGVGIIGGEEAINWGLSGPMLRASGIPWDLRKVDRYESYDEFEWEIQWQKQGDSLARYLVRLSEMTESIKIIQQALEGLPGGPYENLESRGFDRKRNPEWNDFEYRFISKKPSPTFELSKQELYVRVEAPKGELGIFIIGDQSGFPWRWKIRPPGFINLQILPELVKRMKLADIMTILGSIDIIMGEVDR.

The protein belongs to the complex I 49 kDa subunit family. In terms of assembly, NDH is composed of at least 16 different subunits, 5 of which are encoded in the nucleus.

It localises to the plastid. It is found in the chloroplast thylakoid membrane. It catalyses the reaction a plastoquinone + NADH + (n+1) H(+)(in) = a plastoquinol + NAD(+) + n H(+)(out). The catalysed reaction is a plastoquinone + NADPH + (n+1) H(+)(in) = a plastoquinol + NADP(+) + n H(+)(out). NDH shuttles electrons from NAD(P)H:plastoquinone, via FMN and iron-sulfur (Fe-S) centers, to quinones in the photosynthetic chain and possibly in a chloroplast respiratory chain. The immediate electron acceptor for the enzyme in this species is believed to be plastoquinone. Couples the redox reaction to proton translocation, and thus conserves the redox energy in a proton gradient. This Arabis hirsuta (Hairy rock-cress) protein is NAD(P)H-quinone oxidoreductase subunit H, chloroplastic.